The chain runs to 83 residues: Cytochrome b559 subunit alpha (83 aa).

Residues 21–35 (VIHSITIPSLFIAGW) traverse the membrane as a helical segment. A heme-binding site is contributed by histidine 23.

It belongs to the PsbE/PsbF family. As to quaternary structure, heterodimer of an alpha subunit and a beta subunit. PSII is composed of 1 copy each of membrane proteins PsbA, PsbB, PsbC, PsbD, PsbE, PsbF, PsbH, PsbI, PsbJ, PsbK, PsbL, PsbM, PsbT, PsbX, PsbY, PsbZ, Psb30/Ycf12, at least 3 peripheral proteins of the oxygen-evolving complex and a large number of cofactors. It forms dimeric complexes. It depends on heme b as a cofactor.

It is found in the plastid. The protein localises to the chloroplast thylakoid membrane. Its function is as follows. This b-type cytochrome is tightly associated with the reaction center of photosystem II (PSII). PSII is a light-driven water:plastoquinone oxidoreductase that uses light energy to abstract electrons from H(2)O, generating O(2) and a proton gradient subsequently used for ATP formation. It consists of a core antenna complex that captures photons, and an electron transfer chain that converts photonic excitation into a charge separation. The polypeptide is Cytochrome b559 subunit alpha (Physcomitrium patens (Spreading-leaved earth moss)).